Here is a 504-residue protein sequence, read N- to C-terminus: Maturase K (504 aa).

Belongs to the intron maturase 2 family. MatK subfamily.

It is found in the plastid. It localises to the chloroplast. Its function is as follows. Usually encoded in the trnK tRNA gene intron. Probably assists in splicing its own and other chloroplast group II introns. This is Maturase K from Arabidopsis lyrata (Lyre-leaved rock-cress).